A 381-amino-acid chain; its full sequence is Cytochrome b (381 aa).

The next 4 membrane-spanning stretches (helical) occupy residues 34–54 (FGSL…MLAM), 78–99 (WMIR…YLHI), 114–134 (WNTG…GYVL), and 179–199 (FFAL…VHLT). Heme b-binding residues include histidine 84 and histidine 98. Positions 183 and 197 each coordinate heme b. Histidine 202 is an a ubiquinone binding site. 4 consecutive transmembrane segments (helical) span residues 227 to 247 (MKDL…AFFT), 289 to 309 (LGGV…PLLH), 321 to 341 (MSQI…WVGS), and 348 to 368 (FIII…FLFP).

This sequence belongs to the cytochrome b family. The cytochrome bc1 complex contains 11 subunits: 3 respiratory subunits (MT-CYB, CYC1 and UQCRFS1), 2 core proteins (UQCRC1 and UQCRC2) and 6 low-molecular weight proteins (UQCRH/QCR6, UQCRB/QCR7, UQCRQ/QCR8, UQCR10/QCR9, UQCR11/QCR10 and a cleavage product of UQCRFS1). This cytochrome bc1 complex then forms a dimer. Heme b is required as a cofactor.

The protein localises to the mitochondrion inner membrane. In terms of biological role, component of the ubiquinol-cytochrome c reductase complex (complex III or cytochrome b-c1 complex) that is part of the mitochondrial respiratory chain. The b-c1 complex mediates electron transfer from ubiquinol to cytochrome c. Contributes to the generation of a proton gradient across the mitochondrial membrane that is then used for ATP synthesis. The polypeptide is Cytochrome b (MT-CYB) (Nothoprocta perdicaria (Chilean tinamou)).